The sequence spans 66 residues: Moricin-2 (66 aa).

Residues 1 to 24 (MNILKLFFVFIVAMSLVSCSTAAP) form the signal peptide.

As to expression, expressed in fat body and to a lesser extent in hemocyte and Malpighian tubules.

The protein localises to the secreted. In terms of biological role, has antibacterial activity against Gram-positive and Gram-negative bacteria. Probably acts by disturbing membrane functions with its amphipathic structure. In Bombyx mori (Silk moth), this protein is Moricin-2 (MOR2).